Here is a 601-residue protein sequence, read N- to C-terminus: Deuterosome assembly protein 1 (601 aa).

3 coiled-coil regions span residues 14 to 59 (CEAE…NAQT), 86 to 196 (TQNY…GKKQ), and 226 to 277 (IEKL…ELQS). The interval 305–329 (AQDNRKRVESSYSPSPKEAERKRKE) is disordered. Residues 354 to 397 (EEGLCSEQERLRSEISELTQELHQKEVTIATVMKKAALLERQLK) adopt a coiled-coil conformation. Ser-544 carries the post-translational modification Phosphoserine. Residues 555-586 (AAQHFLMEEERRAKELEKLLNTHIDELQRHTE) adopt a coiled-coil conformation.

It belongs to the CEP63 family. In terms of assembly, interacts with CEP152; the interaction is mutually exclusive with CEP63. As to expression, highly enriched in multicilia-abundant tissues (trachea and oviduct).

The protein resides in the cytoplasm. Key structural component of the deuterosome, a structure that promotes de novo centriole amplification in multiciliated cells. Deuterosome-mediated centriole amplification occurs in terminally differentiated multiciliated cells and can generate more than 100 centrioles. Probably sufficient for the specification and formation of the deuterosome inner core. Interacts with CEP152 and recruits PLK4 to activate centriole biogenesis. The sequence is that of Deuterosome assembly protein 1 from Mus musculus (Mouse).